The primary structure comprises 151 residues: UPF0178 protein PSHAb0045 (151 aa).

It belongs to the UPF0178 family.

This chain is UPF0178 protein PSHAb0045, found in Pseudoalteromonas translucida (strain TAC 125).